A 156-amino-acid polypeptide reads, in one-letter code: ATP synthase subunit b (156 aa).

Residues 7–27 (LFAQMIVFFVLWWVVARFVWP) traverse the membrane as a helical segment.

This sequence belongs to the ATPase B chain family. As to quaternary structure, F-type ATPases have 2 components, F(1) - the catalytic core - and F(0) - the membrane proton channel. F(1) has five subunits: alpha(3), beta(3), gamma(1), delta(1), epsilon(1). F(0) has three main subunits: a(1), b(2) and c(10-14). The alpha and beta chains form an alternating ring which encloses part of the gamma chain. F(1) is attached to F(0) by a central stalk formed by the gamma and epsilon chains, while a peripheral stalk is formed by the delta and b chains.

It localises to the cell membrane. Its function is as follows. F(1)F(0) ATP synthase produces ATP from ADP in the presence of a proton or sodium gradient. F-type ATPases consist of two structural domains, F(1) containing the extramembraneous catalytic core and F(0) containing the membrane proton channel, linked together by a central stalk and a peripheral stalk. During catalysis, ATP synthesis in the catalytic domain of F(1) is coupled via a rotary mechanism of the central stalk subunits to proton translocation. Component of the F(0) channel, it forms part of the peripheral stalk, linking F(1) to F(0). The polypeptide is ATP synthase subunit b (Polynucleobacter asymbioticus (strain DSM 18221 / CIP 109841 / QLW-P1DMWA-1) (Polynucleobacter necessarius subsp. asymbioticus)).